The sequence spans 877 residues: Transcriptional corepressor SEUSS (877 aa).

2 disordered regions span residues 1–42 (MVPS…VSPR) and 272–295 (LKSMPQQRPQLPQQFQQQNLPLRP). The span at 272 to 292 (LKSMPQQRPQLPQQFQQQNLP) shows a compositional bias: low complexity. A dimerization region spans residues 321–563 (PEDNNIEFWR…ETRTGPIESL (243 aa)). The Nuclear localization signal motif lies at 330-344 (RKFVAEYFAPNAKKR). Disordered stretches follow at residues 560 to 599 (IESLAKFPRRTGPSSALPGPSPQQASDQLRQQQQQQQQQQ), 612 to 633 (QQTVSQNTNSDQSSRQVALMQG), and 666 to 753 (GRHQ…NESS). Positions 582–618 (QQASDQLRQQQQQQQQQQQQQQQQQQQQQQQQTVSQN) form a coiled coil. Over residues 590 to 599 (QQQQQQQQQQ) the composition is skewed to low complexity. A compositionally biased stretch (polar residues) spans 614-633 (TVSQNTNSDQSSRQVALMQG). Composition is skewed to low complexity over residues 688–703 (QSPSSSGTMVPSSSQQ) and 711–725 (QSPTSSSNNNNPSQN). The span at 726–741 (GIPSVNHMGSTNSPAM) shows a compositional bias: polar residues.

Belongs to the adn1/SEU family. As to quaternary structure, forms a corepressor complex with LUG; LUG is the transcription repressor subunit and SEU the specific DNA-binding adapter. Interacts with AGL24-AP1 and SVP-AP1 dimers when complexed to SEU. Interacts with AP1/AGL7 and SEP3/AGL9. Binds to LUH. As to expression, expressed in root, leaves, seedlings, vegetative and reproductive shoot apical meristems, seeds, floral meristems and all floral organs.

It is found in the nucleus. Its subcellular location is the nucleoplasm. In terms of biological role, DNA-binding adapter subunit of the SEU-LUG transcriptional corepressor of the C class floral homeotic gene AGAMOUS during the early stages of floral meristem development. Is part of the A class cadastral complex that define the boundaries between the A and C class homeotic genes expression and function. Interacts together with APETALA2 and LEUNIG to repress AGAMOUS expression. In association with LUG, regulates petal shape through AGAMOUS-independent mechanisms. Controls cell division during petal development and enable the proper patterning of petal blade vasculature. Required for the proper elaboration of petal polarity along the adaxial/abaxial axis. May act through direct or indirect regulation of PHABULOSA and YAB1 and thus regulate cellular proliferation within the developing petal blade. In association with AINTEGUMENTA (ANT), coordinates patterning cues and cellular proliferation along the three positional axes of the developing gynoecium. Required for the development of the medial ridge and subsequent ovule initiation. This Arabidopsis thaliana (Mouse-ear cress) protein is Transcriptional corepressor SEUSS (SEU).